Reading from the N-terminus, the 114-residue chain is Beta-microseminoprotein (114 aa).

The N-terminal stretch at 1–20 (MNVLLGSVVIFATFVTLCNA) is a signal peptide. Intrachain disulfides connect Cys22-Cys70, Cys38-Cys62, Cys57-Cys93, Cys60-Cys69, and Cys84-Cys107.

Belongs to the beta-microseminoprotein family. As to quaternary structure, homodimer; Interacts with PI16. In terms of tissue distribution, strongly expressed in prostate, liver, kidney, breast and penis. Also expressed in pancreas, esophagus, stomach, deodenum, colon, trachea, lung, salivary glands and fallopian tube. PSP94 is expressed in lung and breast, whereas PSP57 is found in kidney and bladder.

It is found in the secreted. The chain is Beta-microseminoprotein (MSMB) from Homo sapiens (Human).